Reading from the N-terminus, the 107-residue chain is Phosphoribosyl-ATP pyrophosphatase (107 aa).

It belongs to the PRA-PH family.

The protein localises to the cytoplasm. It carries out the reaction 1-(5-phospho-beta-D-ribosyl)-ATP + H2O = 1-(5-phospho-beta-D-ribosyl)-5'-AMP + diphosphate + H(+). It participates in amino-acid biosynthesis; L-histidine biosynthesis; L-histidine from 5-phospho-alpha-D-ribose 1-diphosphate: step 2/9. This chain is Phosphoribosyl-ATP pyrophosphatase, found in Zymomonas mobilis subsp. mobilis (strain ATCC 31821 / ZM4 / CP4).